Here is a 295-residue protein sequence, read N- to C-terminus: HTH-type transcriptional regulator TfdS (295 aa).

An HTH lysR-type domain is found at 1-58; sequence MEFRQLRYFVAAAEEGNVGAAARRLHISQPPVTRQIHALEQHLGVLLFERSARGVQLT. The H-T-H motif DNA-binding region spans 18–37; sequence VGAAARRLHISQPPVTRQIH.

This sequence belongs to the LysR transcriptional regulatory family.

The protein localises to the cytoplasm. Its function is as follows. Involved in the regulation of 3-chlorocatechol degradation. Transcriptional regulator of tfdB expression. Acts as a repressor in the absence of its effector (either 2-cis-chlorodiene lactone or chloromaleylacetate) but acts as an activator when its effector is present. This chain is HTH-type transcriptional regulator TfdS (tfdS), found in Cupriavidus pinatubonensis (strain JMP 134 / LMG 1197) (Cupriavidus necator (strain JMP 134)).